The following is a 120-amino-acid chain: uncharacterized protein (120 aa).

The N-terminal stretch at 1-19 (MKKIVCAVVALLLTLPAWA) is a signal peptide.

This is an uncharacterized protein from Salmonella typhimurium (strain LT2 / SGSC1412 / ATCC 700720).